We begin with the raw amino-acid sequence, 375 residues long: Chaperone protein DnaJ (375 aa).

A J domain is found at 5-70 (GYYEVLGVSK…QKRQAYDQFG (66 aa)). The CR-type zinc-finger motif lies at 142-220 (GKEYKIEIPR…CKGEGLTEKR (79 aa)). Zn(2+) is bound by residues cysteine 155, cysteine 158, cysteine 172, cysteine 175, cysteine 194, cysteine 197, cysteine 208, and cysteine 211. 4 CXXCXGXG motif repeats span residues 155–162 (CVDCTGSG), 172–179 (CPDCSGTG), 194–201 (CPRCKGKG), and 208–215 (CKTCKGEG).

This sequence belongs to the DnaJ family. As to quaternary structure, homodimer. Requires Zn(2+) as cofactor.

The protein resides in the cytoplasm. Its function is as follows. Participates actively in the response to hyperosmotic and heat shock by preventing the aggregation of stress-denatured proteins and by disaggregating proteins, also in an autonomous, DnaK-independent fashion. Unfolded proteins bind initially to DnaJ; upon interaction with the DnaJ-bound protein, DnaK hydrolyzes its bound ATP, resulting in the formation of a stable complex. GrpE releases ADP from DnaK; ATP binding to DnaK triggers the release of the substrate protein, thus completing the reaction cycle. Several rounds of ATP-dependent interactions between DnaJ, DnaK and GrpE are required for fully efficient folding. Also involved, together with DnaK and GrpE, in the DNA replication of plasmids through activation of initiation proteins. This chain is Chaperone protein DnaJ, found in Leptospira biflexa serovar Patoc (strain Patoc 1 / Ames).